A 446-amino-acid chain; its full sequence is Ribosomal protein uS12 methylthiotransferase RimO (446 aa).

Residues 10-122 form the MTTase N-terminal domain; sequence KTLHMVSLGC…IDELVNEKRS (113 aa). Residues cysteine 19, cysteine 53, cysteine 85, cysteine 154, cysteine 158, and cysteine 161 each coordinate [4Fe-4S] cluster. The region spanning 140-369 is the Radical SAM core domain; that stretch reads TGSSYHAYVK…GEIISQTTQE (230 aa). A TRAM domain is found at 372 to 446; sequence ESEVGKTFEV…GDKLLATVIK (75 aa).

It belongs to the methylthiotransferase family. RimO subfamily. It depends on [4Fe-4S] cluster as a cofactor.

The protein resides in the cytoplasm. It carries out the reaction L-aspartate(89)-[ribosomal protein uS12]-hydrogen + (sulfur carrier)-SH + AH2 + 2 S-adenosyl-L-methionine = 3-methylsulfanyl-L-aspartate(89)-[ribosomal protein uS12]-hydrogen + (sulfur carrier)-H + 5'-deoxyadenosine + L-methionine + A + S-adenosyl-L-homocysteine + 2 H(+). In terms of biological role, catalyzes the methylthiolation of an aspartic acid residue of ribosomal protein uS12. The sequence is that of Ribosomal protein uS12 methylthiotransferase RimO from Aliarcobacter butzleri (strain RM4018) (Arcobacter butzleri).